The chain runs to 1023 residues: Hemolysin, chromosomal (1023 aa).

Helical transmembrane passes span isoleucine 237–asparagine 259, lysine 267–alanine 326, and aspartate 364–glutamate 410. Residues lysine 563 and lysine 689 are each lipidated (N6-myristoyl lysine). Hemolysin-type calcium-binding repeat units lie at residues phenylalanine 731–isoleucine 748, glutamate 749–leucine 766, serine 767–leucine 784, isoleucine 785–leucine 802, serine 815–leucine 832, and aspartate 833–tyrosine 850. The segment covering histidine 747–asparagine 763 has biased composition (basic and acidic residues). Residues histidine 747–glycine 780 are disordered.

The protein belongs to the RTX prokaryotic toxin (TC 1.C.11) family. Myristoylated by HlyC; the toxin only becomes active when modified. Mainly myristoylated, while a minor fraction is acylated with pentadecanoyl (C15:0; 26%) and heptadecanoyl (C17:0; 6%) fatty acyl groups. Fatty acylation is involved in binding to host membranes and promotes the irreversible insertion of Hemolysin into the host cell membrane. Can be activated by both myristoylation and palmitoylation, but HlyC catalyzes lysine myristoylation.

The protein resides in the secreted. It localises to the host cell membrane. Bacterial hemolysins are exotoxins that attack blood cell membranes and cause cell rupture by forming a pore. The protein is Hemolysin, chromosomal of Escherichia coli.